A 341-amino-acid chain; its full sequence is 33 kDa chaperonin (341 aa).

2 disulfides stabilise this stretch: Cys245-Cys247 and Cys278-Cys281.

The protein belongs to the HSP33 family. Under oxidizing conditions two disulfide bonds are formed involving the reactive cysteines. Under reducing conditions zinc is bound to the reactive cysteines and the protein is inactive.

Its subcellular location is the cytoplasm. In terms of biological role, redox regulated molecular chaperone. Protects both thermally unfolding and oxidatively damaged proteins from irreversible aggregation. Plays an important role in the bacterial defense system toward oxidative stress. The protein is 33 kDa chaperonin of Thermus thermophilus (strain ATCC 27634 / DSM 579 / HB8).